We begin with the raw amino-acid sequence, 129 residues long: Glycine cleavage system H protein (129 aa).

The 83-residue stretch at 24–106 (TYTVGITEHA…YTDGWIFKIK (83 aa)) folds into the Lipoyl-binding domain. An N6-lipoyllysine modification is found at Lys65.

Belongs to the GcvH family. The glycine cleavage system is composed of four proteins: P, T, L and H. It depends on (R)-lipoate as a cofactor.

The glycine cleavage system catalyzes the degradation of glycine. The H protein shuttles the methylamine group of glycine from the P protein to the T protein. The polypeptide is Glycine cleavage system H protein (Klebsiella pneumoniae subsp. pneumoniae (strain ATCC 700721 / MGH 78578)).